The following is a 686-amino-acid chain: Pentatricopeptide repeat-containing protein At4g08210 (686 aa).

PPR repeat units lie at residues 4 to 38 (DLKL…GISQ), 39 to 69 (NVFI…MSER), 70 to 104 (NIVT…EEEA), 106 to 140 (NEFM…NLRG), 141 to 171 (DVVL…ILRP), 172 to 206 (SSTS…NVVS), 207 to 236 (WNCL…GLVL), 237 to 271 (DGFA…GLES), 272 to 302 (SPFA…EKLA), 306 to 340 (SVAV…DLCF), 341 to 375 (DSYT…GYEL), 376 to 406 (DYIV…LPNK), 407 to 441 (DIIA…GLDA), 442 to 476 (DQFI…GYES), 477 to 507 (EPVT…MLER), 508 to 542 (DVVS…GIEP), 543 to 573 (NKVT…MKSE), and 579 to 609 (YLEH…MPLE). The interval 614 to 686 (IWTSLLTACG…AKESGMSWII (73 aa)) is type E motif; degenerate.

The protein belongs to the PPR family. PCMP-E subfamily.

The chain is Pentatricopeptide repeat-containing protein At4g08210 (PCMP-E100) from Arabidopsis thaliana (Mouse-ear cress).